The chain runs to 342 residues: uncharacterized protein (342 aa).

Belongs to the bacterial luciferase oxidoreductase family.

This is an uncharacterized protein from Sinorhizobium fredii (strain NBRC 101917 / NGR234).